We begin with the raw amino-acid sequence, 459 residues long: MPTSVPRGAPFLLLPPLLMLSAVLAVPVDRAAPHQEDNQATETPDTGLYYHRYLQEVINVLETDGHFREKLQAANAEDIKSGKLSQELDFVSHNVRTKLDELKRQEVSRLRMLLKAKMDAKQEPNLQVDHMNLLKQFEHLDPQNQHTFEARDLELLIQTATRDLAQYDAAHHEEFKRYEMLKEHERRRYLESLGEEQRKEAERKLQEQQRRHREHPKVNVPGSQAQLKEVWEELDGLDPNRFNPKTFFILHDINSDGVLDEQELEALFTKELEKVYDPKNEEDDMREMEEERLRMREHVMKNVDTNQDRLVTLEEFLASTQRKEFGETAEGWKTVEMYPAYTEEELKRFEEELAAREAELNARAQRLSQETEALGRSQDRLEAQKRELQQAVLQMEQRKQQQQEQSAPPSQPDGQLQFRADTGDAPVPAPAGDQKDVPASEKKVPEQPPVLPQLDSQHL.

Residues 1-25 (MPTSVPRGAPFLLLPPLLMLSAVLA) form the signal peptide. Ser85 is subject to Phosphoserine. Thr147 is subject to Phosphothreonine. The stretch at 149-217 (EARDLELLIQ…QQRRHREHPK (69 aa)) forms a coiled coil. The DNA-binding element occupies 171–217 (HHEEFKRYEMLKEHERRRYLESLGEEQRKEAERKLQEQQRRHREHPK). The span at 192–209 (SLGEEQRKEAERKLQEQQ) shows a compositional bias: basic and acidic residues. A disordered region spans residues 192–220 (SLGEEQRKEAERKLQEQQRRHREHPKVNV). A binds to GNAI2 and GNAI3 region spans residues 227–320 (LKEVWEELDG…VTLEEFLAST (94 aa)). 2 EF-hand domains span residues 239–274 (PNRF…ELEK) and 291–326 (ERLR…KEFG). Residues Asp252, Asn254, Asp256, Glu263, Asp304, Asn306, Asp308, and Glu315 each contribute to the Ca(2+) site. Residues 302 to 332 (NVDTNQDRLVTLEEFLASTQRKEFGETAEGW) carry the GBA motif. Residues 340–407 (AYTEEELKRF…RKQQQQEQSA (68 aa)) are a coiled coil. Ser368 is modified (phosphoserine). The interval 393–459 (LQMEQRKQQQ…VLPQLDSQHL (67 aa)) is disordered. A compositionally biased stretch (basic and acidic residues) spans 433 to 445 (DQKDVPASEKKVP). Residue Ser456 is modified to Phosphoserine.

This sequence belongs to the nucleobindin family. As to quaternary structure, interacts (via GBA motif) with guanine nucleotide-binding protein G(i) alpha subunits GNAI1, GNAI2 and GNAI3 with higher affinity for GNAI1 and GNAI3 than for GNAI2. Preferentially interacts with inactive rather than active GNAI3. Interaction with GNAI3 is inhibited when NUCB1 binds calcium, probably due to a conformational change which renders the GBA motif inaccessible. In terms of tissue distribution, minor constituent of the mineralized matrix of bone. Detected in calvaria, rib cartilage, liver, kidney, spleen, brain, lung, skeletal and heart muscle with highest expression in calvaria and approximately half the amount in kidney, liver and brain.

The protein resides in the golgi apparatus. Its subcellular location is the cis-Golgi network membrane. It is found in the cytoplasm. It localises to the secreted. Major calcium-binding protein of the Golgi which may have a role in calcium homeostasis. Acts as a non-receptor guanine nucleotide exchange factor which binds to and activates alpha subunits of guanine nucleotide-binding proteins (G proteins). The protein is Nucleobindin-1 (Nucb1) of Rattus norvegicus (Rat).